The chain runs to 303 residues: 2-dehydropantoate 2-reductase (303 aa).

NADP(+)-binding positions include 7 to 12, asparagine 98, and alanine 122; that span reads GCGALG. Asparagine 98 contributes to the substrate binding site. The Proton donor role is filled by lysine 176. Asparagine 180, asparagine 184, asparagine 194, and serine 244 together coordinate substrate. An NADP(+)-binding site is contributed by glutamate 256.

The protein belongs to the ketopantoate reductase family. Monomer.

The protein localises to the cytoplasm. It catalyses the reaction (R)-pantoate + NADP(+) = 2-dehydropantoate + NADPH + H(+). It functions in the pathway cofactor biosynthesis; (R)-pantothenate biosynthesis; (R)-pantoate from 3-methyl-2-oxobutanoate: step 2/2. Functionally, catalyzes the NADPH-dependent reduction of ketopantoate into pantoic acid. Has a strong preference for NADPH over NADH as the electron acceptor. Pantoate, ketoisovalerate, oxaloacetate, pyruvate, 3-hydroxypyruvate, alpha-ketoglutarate, alpha-ketobutyrate, and acetaldehyde cannot serve as substrates for reduction. The sequence is that of 2-dehydropantoate 2-reductase from Salmonella typhimurium (strain LT2 / SGSC1412 / ATCC 700720).